The sequence spans 297 residues: UDP-N-acetylenolpyruvoylglucosamine reductase (297 aa).

The 174-residue stretch at 22 to 195 (RAGGTARYYA…LAGRFRLQRG (174 aa)) folds into the FAD-binding PCMH-type domain. Residue Arg169 is part of the active site. The Proton donor role is filled by Ser223. Glu293 is an active-site residue.

The protein belongs to the MurB family. The cofactor is FAD.

It localises to the cytoplasm. It carries out the reaction UDP-N-acetyl-alpha-D-muramate + NADP(+) = UDP-N-acetyl-3-O-(1-carboxyvinyl)-alpha-D-glucosamine + NADPH + H(+). It participates in cell wall biogenesis; peptidoglycan biosynthesis. Its function is as follows. Cell wall formation. This is UDP-N-acetylenolpyruvoylglucosamine reductase from Chloroflexus aurantiacus (strain ATCC 29364 / DSM 637 / Y-400-fl).